A 120-amino-acid polypeptide reads, in one-letter code: Ribonuclease P protein component (120 aa).

Belongs to the RnpA family. In terms of assembly, consists of a catalytic RNA component (M1 or rnpB) and a protein subunit.

The enzyme catalyses Endonucleolytic cleavage of RNA, removing 5'-extranucleotides from tRNA precursor.. In terms of biological role, RNaseP catalyzes the removal of the 5'-leader sequence from pre-tRNA to produce the mature 5'-terminus. It can also cleave other RNA substrates such as 4.5S RNA. The protein component plays an auxiliary but essential role in vivo by binding to the 5'-leader sequence and broadening the substrate specificity of the ribozyme. In Chelativorans sp. (strain BNC1), this protein is Ribonuclease P protein component.